The sequence spans 187 residues: ATP synthase subunit b 2 (187 aa).

A disordered region spans residues 1-25 (MAESHGGAKGPAAGAHTGAEGGHGG). Residues 39-59 (LVSLAIFFVVLYVIVSKLALP) traverse the membrane as a helical segment. Residues 103-122 (RAQAIGNESRDKANAQAETE) form a disordered region. Residues 110–122 (ESRDKANAQAETE) are compositionally biased toward basic and acidic residues.

The protein belongs to the ATPase B chain family. F-type ATPases have 2 components, F(1) - the catalytic core - and F(0) - the membrane proton channel. F(1) has five subunits: alpha(3), beta(3), gamma(1), delta(1), epsilon(1). F(0) has three main subunits: a(1), b(2) and c(10-14). The alpha and beta chains form an alternating ring which encloses part of the gamma chain. F(1) is attached to F(0) by a central stalk formed by the gamma and epsilon chains, while a peripheral stalk is formed by the delta and b chains.

The protein localises to the cell inner membrane. In terms of biological role, f(1)F(0) ATP synthase produces ATP from ADP in the presence of a proton or sodium gradient. F-type ATPases consist of two structural domains, F(1) containing the extramembraneous catalytic core and F(0) containing the membrane proton channel, linked together by a central stalk and a peripheral stalk. During catalysis, ATP synthesis in the catalytic domain of F(1) is coupled via a rotary mechanism of the central stalk subunits to proton translocation. Component of the F(0) channel, it forms part of the peripheral stalk, linking F(1) to F(0). The b'-subunit is a diverged and duplicated form of b found in plants and photosynthetic bacteria. In Bradyrhizobium diazoefficiens (strain JCM 10833 / BCRC 13528 / IAM 13628 / NBRC 14792 / USDA 110), this protein is ATP synthase subunit b 2 (atpF2).